Here is a 107-residue protein sequence, read N- to C-terminus: Universal stress protein B homolog (107 aa).

Transmembrane regions (helical) follow at residues 6-26 and 86-106; these read TILFALMVVTGVNMIRYLTAL and VRELFVLSTALLGVTLLAAFI.

Belongs to the universal stress protein B family.

It is found in the cell inner membrane. The sequence is that of Universal stress protein B homolog from Vibrio parahaemolyticus serotype O3:K6 (strain RIMD 2210633).